A 424-amino-acid chain; its full sequence is Serine--tRNA ligase (424 aa).

233-235 (TAE) is an L-serine binding site. ATP is bound at residue 264 to 266 (RRE). Residue E287 coordinates L-serine. Residue 351–354 (EISS) participates in ATP binding. S386 is an L-serine binding site.

It belongs to the class-II aminoacyl-tRNA synthetase family. Type-1 seryl-tRNA synthetase subfamily. As to quaternary structure, homodimer. The tRNA molecule binds across the dimer.

Its subcellular location is the cytoplasm. It carries out the reaction tRNA(Ser) + L-serine + ATP = L-seryl-tRNA(Ser) + AMP + diphosphate + H(+). It catalyses the reaction tRNA(Sec) + L-serine + ATP = L-seryl-tRNA(Sec) + AMP + diphosphate + H(+). The protein operates within aminoacyl-tRNA biosynthesis; selenocysteinyl-tRNA(Sec) biosynthesis; L-seryl-tRNA(Sec) from L-serine and tRNA(Sec): step 1/1. Its function is as follows. Catalyzes the attachment of serine to tRNA(Ser). Is also able to aminoacylate tRNA(Sec) with serine, to form the misacylated tRNA L-seryl-tRNA(Sec), which will be further converted into selenocysteinyl-tRNA(Sec). The polypeptide is Serine--tRNA ligase (Petrotoga mobilis (strain DSM 10674 / SJ95)).